Reading from the N-terminus, the 78-residue chain is Dihydrofolate reductase type 2 (78 aa).

NADP(+)-binding positions include lysine 32 and 66–69; that span reads VQIY. Isoleucine 68 provides a ligand contact to substrate.

In terms of assembly, homotetramer.

It catalyses the reaction (6S)-5,6,7,8-tetrahydrofolate + NADP(+) = 7,8-dihydrofolate + NADPH + H(+). The protein operates within cofactor biosynthesis; tetrahydrofolate biosynthesis; 5,6,7,8-tetrahydrofolate from 7,8-dihydrofolate: step 1/1. Its function is as follows. Key enzyme in folate metabolism. Catalyzes an essential reaction for de novo glycine and purine synthesis, and for DNA precursor synthesis. This is Dihydrofolate reductase type 2 from Escherichia coli.